We begin with the raw amino-acid sequence, 227 residues long: MRLTPTERDRLLLFGAAELARARRARGLRLNVPEATALIADTVCEAARDGRRLAEAIAAARAVLGPDDVLPGVADIVTEVHVEAVFDDGSRLAVVTDPIGGGLGDQAPGALLPGPEHTEPEAVVRVLVTNTATVPVSVTSHFHFFEANPRLDFDRAAAYGMRAAVPAGSSVRFGPGESVEIGLVPVGGDRIAIGFAGLVDGPLDAPGAKEEALRRAAACGYLGVEQR.

A urease gamma region spans residues 1–101 (MRLTPTERDR…LAVVTDPIGG (101 aa)). The segment at 102–227 (GLGDQAPGAL…ACGYLGVEQR (126 aa)) is urease beta.

In the N-terminal section; belongs to the urease gamma subunit family. The protein in the C-terminal section; belongs to the urease beta subunit family. In terms of assembly, heterohexamer of 3 UreC (alpha) and 3 UreAB (gamma/beta) subunits.

Its subcellular location is the cytoplasm. The enzyme catalyses urea + 2 H2O + H(+) = hydrogencarbonate + 2 NH4(+). It participates in nitrogen metabolism; urea degradation; CO(2) and NH(3) from urea (urease route): step 1/1. In Streptomyces avermitilis (strain ATCC 31267 / DSM 46492 / JCM 5070 / NBRC 14893 / NCIMB 12804 / NRRL 8165 / MA-4680), this protein is Urease subunit gamma/beta.